We begin with the raw amino-acid sequence, 620 residues long: Probable translation initiation factor IF-2 (620 aa).

Positions 1-10 (MSDTDADADT) are enriched in acidic residues. Residues 1 to 29 (MSDTDADADTDAVSTTETSMNADANANAD) form a disordered region. The span at 11–29 (DAVSTTETSMNADANANAD) shows a compositional bias: low complexity. Residues 33 to 248 (LRTPIVAVLG…VLMGLSQRYM (216 aa)) form the tr-type G domain. The tract at residues 42 to 49 (GHVDHGKT) is G1. 42 to 49 (GHVDHGKT) is a GTP binding site. The G2 stretch occupies residues 67–71 (AITQH). A G3 region spans residues 104 to 107 (DTPG). Residues 104–108 (DTPGH) and 158–161 (NKVD) each bind GTP. Residues 158-161 (NKVD) form a G4 region. Positions 162–183 (TTPGWTPTDGSPIQPTYESQPS) are enriched in polar residues. The tract at residues 162 to 185 (TTPGWTPTDGSPIQPTYESQPSAA) is disordered. A G5 region spans residues 226–228 (SAI).

Belongs to the TRAFAC class translation factor GTPase superfamily. Classic translation factor GTPase family. IF-2 subfamily.

Its function is as follows. Function in general translation initiation by promoting the binding of the formylmethionine-tRNA to ribosomes. Seems to function along with eIF-2. This chain is Probable translation initiation factor IF-2, found in Haloquadratum walsbyi (strain DSM 16790 / HBSQ001).